The chain runs to 473 residues: Probable glucose-6-phosphate 1-dehydrogenase C7.13c (473 aa).

The NADP(+) site is built by arginine 43, tyrosine 121, and lysine 144. Residues lysine 144, 174-178 (HYTAK), glutamate 213, and aspartate 232 each bind D-glucose 6-phosphate. The Proton acceptor role is filled by histidine 237. Lysine 331 lines the D-glucose 6-phosphate pocket. Residue lysine 341 participates in NADP(+) binding. Glutamine 366 provides a ligand contact to D-glucose 6-phosphate.

The protein belongs to the glucose-6-phosphate dehydrogenase family.

Its subcellular location is the cytoplasm. It catalyses the reaction D-glucose 6-phosphate + NADP(+) = 6-phospho-D-glucono-1,5-lactone + NADPH + H(+). The protein operates within carbohydrate degradation; pentose phosphate pathway; D-ribulose 5-phosphate from D-glucose 6-phosphate (oxidative stage): step 1/3. Functionally, catalyzes the rate-limiting step of the oxidative pentose-phosphate pathway, which represents a route for the dissimilation of carbohydrates besides glycolysis. The main function of this enzyme is to provide reducing power (NADPH) and pentose phosphates for fatty acid and nucleic acid synthesis. This chain is Probable glucose-6-phosphate 1-dehydrogenase C7.13c, found in Schizosaccharomyces pombe (strain 972 / ATCC 24843) (Fission yeast).